A 148-amino-acid polypeptide reads, in one-letter code: Macrodomain Ter protein (148 aa).

It belongs to the MatP family. In terms of assembly, homodimer.

The protein resides in the cytoplasm. In terms of biological role, required for spatial organization of the terminus region of the chromosome (Ter macrodomain) during the cell cycle. Prevents early segregation of duplicated Ter macrodomains during cell division. Binds specifically to matS, which is a 13 bp signature motif repeated within the Ter macrodomain. The sequence is that of Macrodomain Ter protein from Haemophilus influenzae (strain 86-028NP).